The chain runs to 318 residues: Probable arabinan endo-1,5-alpha-L-arabinosidase C (318 aa).

Residues 1–28 (MLSFVLLLCVALVNAYSDPGACSGTCWA) form the signal peptide. Residue aspartate 30 is the Proton acceptor of the active site. Asparagine 72, asparagine 80, and asparagine 188 each carry an N-linked (GlcNAc...) asparagine glycan. The Proton donor role is filled by glutamate 196. N-linked (GlcNAc...) asparagine glycosylation is present at asparagine 277.

This sequence belongs to the glycosyl hydrolase 43 family.

It localises to the secreted. The catalysed reaction is Endohydrolysis of (1-&gt;5)-alpha-arabinofuranosidic linkages in (1-&gt;5)-arabinans.. It participates in glycan metabolism; L-arabinan degradation. Endo-1,5-alpha-L-arabinanase involved in degradation of pectin. Its preferred substrate is linear 1,5-alpha-L-arabinan. This Aspergillus niger (strain ATCC MYA-4892 / CBS 513.88 / FGSC A1513) protein is Probable arabinan endo-1,5-alpha-L-arabinosidase C (abnC).